Consider the following 140-residue polypeptide: RxLR effector protein CRE9 (140 aa).

The N-terminal stretch at 1-24 (MRTSVFVALVVATFVATCISFTSA) is a signal peptide. A RxLR-dEER motif is present at residues 43–61 (RTLAEADDWWLASTNTEER). The helical transmembrane segment at 119–139 (LKILYGALLAGLIIVGVEAML) threads the bilayer.

This sequence belongs to the RxLR effector family.

The protein localises to the secreted. It is found in the host cell. The protein resides in the membrane. Effector that is involved in host plant infection. Contributes to virulence during the early infection stage, by inhibiting plant defense responses induced by both PAMP-triggered immunity (PTI) and effector-triggered immunity (ETI). The protein is RxLR effector protein CRE9 of Phytophthora infestans (strain T30-4) (Potato late blight agent).